The following is a 105-amino-acid chain: Nucleoid-associated protein MW0434 (105 aa).

Residues 1 to 33 (MRGGGNMQQMMKQMQKMQKKMAQEQEKLKEERI) form a disordered region. A compositionally biased stretch (low complexity) spans 7 to 16 (MQQMMKQMQK). Residues 21-33 (MAQEQEKLKEERI) are compositionally biased toward basic and acidic residues.

The protein belongs to the YbaB/EbfC family. Homodimer.

It is found in the cytoplasm. Its subcellular location is the nucleoid. Binds to DNA and alters its conformation. May be involved in regulation of gene expression, nucleoid organization and DNA protection. The polypeptide is Nucleoid-associated protein MW0434 (Staphylococcus aureus (strain MW2)).